Consider the following 284-residue polypeptide: uncharacterized protein (284 aa).

The tract at residues 236–284 is disordered; sequence IDITNEADSSEIIDSEPSNKDETEKPSAQETDPFDGKPVDIKDDELPFD. 2 stretches are compositionally biased toward basic and acidic residues: residues 252–262 and 269–284; these read PSNKDETEKPS and FDGKPVDIKDDELPFD.

This is an uncharacterized protein from Bacillus subtilis (strain 168).